Reading from the N-terminus, the 276-residue chain is Diaminopimelate epimerase (276 aa).

The substrate site is built by Asn-11, Gln-44, and Asn-64. Residue Cys-73 is the Proton donor of the active site. Substrate contacts are provided by residues 74–75 (GN), Asn-157, Asn-190, and 208–209 (ER). The active-site Proton acceptor is the Cys-217. 218–219 (GS) provides a ligand contact to substrate.

This sequence belongs to the diaminopimelate epimerase family. Homodimer.

The protein localises to the cytoplasm. It catalyses the reaction (2S,6S)-2,6-diaminopimelate = meso-2,6-diaminopimelate. It participates in amino-acid biosynthesis; L-lysine biosynthesis via DAP pathway; DL-2,6-diaminopimelate from LL-2,6-diaminopimelate: step 1/1. Its function is as follows. Catalyzes the stereoinversion of LL-2,6-diaminopimelate (L,L-DAP) to meso-diaminopimelate (meso-DAP), a precursor of L-lysine and an essential component of the bacterial peptidoglycan. The sequence is that of Diaminopimelate epimerase from Blochmanniella floridana.